A 77-amino-acid chain; its full sequence is UPF0291 protein OB1671 (77 aa).

The disordered stretch occupies residues 56-77 (DPEGKDVTPQKLRDYQDRNKKH). Positions 57-77 (PEGKDVTPQKLRDYQDRNKKH) are enriched in basic and acidic residues.

The protein belongs to the UPF0291 family.

The protein localises to the cytoplasm. The sequence is that of UPF0291 protein OB1671 from Oceanobacillus iheyensis (strain DSM 14371 / CIP 107618 / JCM 11309 / KCTC 3954 / HTE831).